The sequence spans 432 residues: Adenylosuccinate synthetase (432 aa).

Residues 13-19 and 41-43 each bind GTP; these read GDEGKGK and GHT. Residue Asp-14 is the Proton acceptor of the active site. Mg(2+) is bound by residues Asp-14 and Gly-41. IMP is bound by residues 14–17, 39–42, Thr-130, Arg-144, Gln-225, Thr-240, and Arg-304; these read DEGK and NAGH. Catalysis depends on His-42, which acts as the Proton donor. 300-306 is a substrate binding site; that stretch reads ATTGRRR. GTP-binding positions include Arg-306, 332 to 334, and 415 to 417; these read KLD and STG.

It belongs to the adenylosuccinate synthetase family. In terms of assembly, homodimer. Mg(2+) is required as a cofactor.

The protein resides in the cytoplasm. It carries out the reaction IMP + L-aspartate + GTP = N(6)-(1,2-dicarboxyethyl)-AMP + GDP + phosphate + 2 H(+). The protein operates within purine metabolism; AMP biosynthesis via de novo pathway; AMP from IMP: step 1/2. Plays an important role in the de novo pathway of purine nucleotide biosynthesis. Catalyzes the first committed step in the biosynthesis of AMP from IMP. The chain is Adenylosuccinate synthetase from Salmonella choleraesuis (strain SC-B67).